The sequence spans 166 residues: Interferon gamma (166 aa).

The N-terminal stretch at 1 to 23 is a signal peptide; that stretch reads MKYTSYILAFQLCIVLGSLGCYC. Pyrrolidone carboxylic acid is present on Q24. N48 carries N-linked (GlcNAc...) asparagine glycosylation. Residue N120 is glycosylated (N-linked (GlcNAc...) asparagine; in dimeric form). Residues 147–166 form a disordered region; that stretch reads AKTGKRKRSQMLFRGRRASQ. The span at 149–166 shows a compositional bias: basic residues; it reads TGKRKRSQMLFRGRRASQ. The propeptide occupies 162-166; sequence RRASQ.

It belongs to the type II (or gamma) interferon family. As to quaternary structure, homodimer. Interacts with IFNGR1 (via extracellular domain); this interaction promotes IFNGR1 dimerization. Post-translationally, proteolytic processing produces C-terminal heterogeneity, with proteins ending alternatively at Gly-150, Met-157 or Gly-161. Released primarily from activated T lymphocytes.

It is found in the secreted. In terms of biological role, type II interferon produced by immune cells such as T-cells and NK cells that plays crucial roles in antimicrobial, antiviral, and antitumor responses by activating effector immune cells and enhancing antigen presentation. Primarily signals through the JAK-STAT pathway after interaction with its receptor IFNGR1 to affect gene regulation. Upon IFNG binding, IFNGR1 intracellular domain opens out to allow association of downstream signaling components JAK2, JAK1 and STAT1, leading to STAT1 activation, nuclear translocation and transcription of IFNG-regulated genes. Many of the induced genes are transcription factors such as IRF1 that are able to further drive regulation of a next wave of transcription. Plays a role in class I antigen presentation pathway by inducing a replacement of catalytic proteasome subunits with immunoproteasome subunits. In turn, increases the quantity, quality, and repertoire of peptides for class I MHC loading. Increases the efficiency of peptide generation also by inducing the expression of activator PA28 that associates with the proteasome and alters its proteolytic cleavage preference. Up-regulates as well MHC II complexes on the cell surface by promoting expression of several key molecules such as cathepsins B/CTSB, H/CTSH, and L/CTSL. Participates in the regulation of hematopoietic stem cells during development and under homeostatic conditions by affecting their development, quiescence, and differentiation. The polypeptide is Interferon gamma (IFNG) (Homo sapiens (Human)).